A 473-amino-acid polypeptide reads, in one-letter code: MFQRSGAAHHIKLISSRRCRFKSSFAVALNAASKLVTPKILWNNPISLVSKEMNTLAKNIVALIGSGHPVLNKVTSYYFETEGKKVRPLLVLLLSRALSEIPMTERNHLKIDKSDVPEDPIYSKPSQNQLFQRPASSISPLHILHGIKPLNPLTKGPEPLPEETFDKQRGILPKQRRLAEIVEMIHTASLLHDDVIDHSDTRRGRPSGNAAFTNKMAVLAGDFLLGRATVSISRLHNPEVVELMSNSIANLVEGEFMQLKNTSIDADIDTIENGHKLLPVPSKKLEVKEHDFRVPSRQQGLQLSHDQIIETAFEYYIHKTYLKTAALISKSCRCAAILSGASPAVIDECYDFGRNLGICFQLVDDMLDFTVSGKDLGKPSGADLKLGIATAPVLFAWKEDPSLGPLISRNFSERGDVEKTIDSVRLHNGIAKTKILAEEYRDKALQNLRDSLPESDARSALEFLTNSILTRRK.

Residues Lys-84, Arg-87, and His-186 each contribute to the isopentenyl diphosphate site. 2 residues coordinate Mg(2+): Asp-193 and Asp-197. Arg-202 contributes to the an all-trans-polyprenyl diphosphate binding site. Isopentenyl diphosphate is bound at residue Arg-203. 4 residues coordinate an all-trans-polyprenyl diphosphate: Lys-323, Thr-324, Gln-361, and Lys-378.

Belongs to the FPP/GGPP synthase family. Mg(2+) serves as cofactor.

The protein resides in the mitochondrion inner membrane. It functions in the pathway cofactor biosynthesis; ubiquinone biosynthesis. Its function is as follows. Assembly of polyisoprenoid side chains. The polyprenyl synthase of coenzyme Q biosynthesis catalyzes the formation from isopentenyl diphosphate of all trans-polyprenyl pyrophosphates generally ranging in length of between 6 and 10 isoprene units depending on the species. The sequence is that of Hexaprenyl pyrophosphate synthase, mitochondrial (COQ1) from Saccharomyces cerevisiae (strain ATCC 204508 / S288c) (Baker's yeast).